The primary structure comprises 174 residues: Ubiquitin-like protein 4B (174 aa).

In terms of domain architecture, Ubiquitin-like spans 1–76; the sequence is MFLTVKLLLG…INVIMQPLEK (76 aa). Basic and acidic residues predominate over residues 141 to 156; it reads EPHVEPAGERELEAKA. A disordered region spans residues 141–174; it reads EPHVEPAGERELEAKARPQSSCDMEEKEEAAADQ. Acidic residues predominate over residues 163 to 174; that stretch reads DMEEKEEAAADQ.

The protein resides in the cytoplasm. This Homo sapiens (Human) protein is Ubiquitin-like protein 4B (UBL4B).